The sequence spans 310 residues: N-acetyl-gamma-glutamyl-phosphate reductase (310 aa).

Residue C117 is part of the active site.

The protein belongs to the NAGSA dehydrogenase family. Type 2 subfamily.

It localises to the cytoplasm. The catalysed reaction is N-acetyl-L-glutamate 5-semialdehyde + phosphate + NADP(+) = N-acetyl-L-glutamyl 5-phosphate + NADPH + H(+). The protein operates within amino-acid biosynthesis; L-arginine biosynthesis; N(2)-acetyl-L-ornithine from L-glutamate: step 3/4. Catalyzes the NADPH-dependent reduction of N-acetyl-5-glutamyl phosphate to yield N-acetyl-L-glutamate 5-semialdehyde. The protein is N-acetyl-gamma-glutamyl-phosphate reductase of Brucella suis (strain ATCC 23445 / NCTC 10510).